The sequence spans 239 residues: Peptidyl-tRNA hydrolase (239 aa).

Y14 contacts tRNA. Residue H19 is the Proton acceptor of the active site. TRNA-binding residues include F64, N66, and N112.

The protein belongs to the PTH family. As to quaternary structure, monomer.

It is found in the cytoplasm. It catalyses the reaction an N-acyl-L-alpha-aminoacyl-tRNA + H2O = an N-acyl-L-amino acid + a tRNA + H(+). Hydrolyzes ribosome-free peptidyl-tRNAs (with 1 or more amino acids incorporated), which drop off the ribosome during protein synthesis, or as a result of ribosome stalling. Functionally, catalyzes the release of premature peptidyl moieties from peptidyl-tRNA molecules trapped in stalled 50S ribosomal subunits, and thus maintains levels of free tRNAs and 50S ribosomes. The polypeptide is Peptidyl-tRNA hydrolase (Rhizobium meliloti (strain 1021) (Ensifer meliloti)).